We begin with the raw amino-acid sequence, 379 residues long: Probable protein phosphatase 2C 46 (379 aa).

The N-terminal stretch at 1-20 (MLSTLMKLLSACLWPSSSSG) is a signal peptide. Residues 42-353 (LVGEFSMAVV…DDITVVIIFL (312 aa)) form the PPM-type phosphatase domain. At S73 the chain carries Phosphoserine. The Mn(2+) site is built by D84, G85, D285, and D344.

Belongs to the PP2C family. Interacts with SAUR19. Mg(2+) is required as a cofactor. Mn(2+) serves as cofactor.

The enzyme catalyses O-phospho-L-seryl-[protein] + H2O = L-seryl-[protein] + phosphate. The catalysed reaction is O-phospho-L-threonyl-[protein] + H2O = L-threonyl-[protein] + phosphate. Its function is as follows. May dephosphorylate and repress plasma membrane H(+)-ATPases (PM H(+)-ATPases, e.g. AHA1 and AHA2), thus influencing negatively plant growth and fitness. The protein is Probable protein phosphatase 2C 46 of Arabidopsis thaliana (Mouse-ear cress).